The following is a 126-amino-acid chain: Glycine cleavage system H protein (126 aa).

One can recognise a Lipoyl-binding domain in the interval 23-104 (KVRVGITDFA…YDEGWMIEII (82 aa)). Lys64 is subject to N6-lipoyllysine.

It belongs to the GcvH family. The glycine cleavage system is composed of four proteins: P, T, L and H. The cofactor is (R)-lipoate.

Its function is as follows. The glycine cleavage system catalyzes the degradation of glycine. The H protein shuttles the methylamine group of glycine from the P protein to the T protein. This chain is Glycine cleavage system H protein, found in Chlorobium phaeobacteroides (strain BS1).